A 339-amino-acid polypeptide reads, in one-letter code: Transmembrane protein 120B (339 aa).

Residues 1 to 77 (MSGQLERCER…ASREEAELVQ (77 aa)) adopt a coiled-coil conformation. The next 6 membrane-spanning stretches (helical) occupy residues 102–124 (GLYL…AKFA), 132–152 (FKLY…FFLH), 159–179 (VFNF…SILI), 187–207 (GWWV…LTWP), 270–290 (FLLP…VTLF), and 302–322 (QVFV…LTTL).

The protein belongs to the TMEM120 family. Heterooligomer with TMEM120A.

It localises to the nucleus inner membrane. Functionally, necessary for efficient adipogenesis. Does not show ion channel activity. This chain is Transmembrane protein 120B (TMEM120B), found in Bos taurus (Bovine).